The chain runs to 1139 residues: Dual 3',5'-cyclic-AMP and -GMP phosphodiesterase beta (1139 aa).

Disordered regions lie at residues 1–42 (MGKV…NINK) and 154–177 (GISE…STSN). Residues 1–429 (MGKVEDFEEH…LNLNNWISSR (429 aa)) are Cytoplasmic-facing. The span at 9-22 (EHNKNSNQDIEKNV) shows a compositional bias: basic and acidic residues. Over residues 29–42 (NSNTINDQNENINK) the composition is skewed to polar residues. Residues 430-450 (MIIIGIVMLILSFIIWPLTTW) form a helical membrane-spanning segment. At 451–462 (SLKTSTWGRETY) the chain is on the extracellular side. Residues 463–483 (IIILFHTLMAINTLILIFFII) traverse the membrane as a helical segment. Over 484 to 498 (IGSTELCKYSECMSY) the chain is Cytoplasmic. Residues 499–519 (VLFSLMVALWGLWNIAIGLTL) form a helical membrane-spanning segment. At 520–536 (EYNPNLSEMPTTTYELE) the chain is on the extracellular side. Asparagine 524 carries an N-linked (GlcNAc...) asparagine glycan. A helical transmembrane segment spans residues 537–557 (MIYVLTYIYGFLPLVIIDIFF). Over 558–564 (PSRTKYN) the chain is Cytoplasmic. The helical transmembrane segment at 565-585 (WIIHLIFIFLNSSSIILVGSA) threads the bilayer. Over 586–592 (KPDFVPE) the chain is Extracellular. A helical membrane pass occupies residues 593-613 (IYVVFRILAYTTLCIFLYIGS). Residues 614-1139 (YTSELQIRYV…TLFFIKNVSD (526 aa)) lie on the Cytoplasmic side of the membrane. Residues 775-1098 (INISQLTKMI…IMWDTLMKEE (324 aa)) form the PDEase domain. The active-site Proton donor is histidine 847. 847–851 (HNTIH) lines the a nucleoside 3',5'-cyclic phosphate pocket. The a divalent metal cation site is built by histidine 851, histidine 887, aspartate 888, and aspartate 1000. A nucleoside 3',5'-cyclic phosphate contacts are provided by aspartate 888, aspartate 1000, and glutamine 1052.

Belongs to the cyclic nucleotide phosphodiesterase family. The cofactor is a divalent metal cation.

The protein localises to the cell membrane. It is found in the endoplasmic reticulum membrane. The enzyme catalyses 3',5'-cyclic GMP + H2O = GMP + H(+). The catalysed reaction is 3',5'-cyclic AMP + H2O = AMP + H(+). Its pathway is purine metabolism; 3',5'-cyclic GMP degradation; GMP from 3',5'-cyclic GMP: step 1/1. It participates in purine metabolism; 3',5'-cyclic AMP degradation; AMP from 3',5'-cyclic AMP: step 1/1. In terms of biological role, plays a role in signal transduction by regulating the intracellular concentration of cyclic nucleotides cAMP and cGMP. Catalyzes the hydrolysis of both cAMP and cGMP to 5'-AMP and 5'-GMP, respectively. By regulating cAMP levels during the asexual blood stage and, thus PKA activation, required for merozoite invasion of erythrocytes and for the parasite development immediately following invasion. The polypeptide is Dual 3',5'-cyclic-AMP and -GMP phosphodiesterase beta (Plasmodium falciparum (isolate 3D7)).